The following is a 221-amino-acid chain: GTP-binding nuclear protein Ran-A1 (221 aa).

Residues 10–174 form the Small GTPase Ran-type domain; that stretch reads DYPSFKLVIV…LYLARKLAGD (165 aa). 21–28 serves as a coordination point for GTP; it reads DGGTGKTT. A switch-I region spans residues 40–48; that stretch reads KKYEPTIGV. GTP-binding positions include glycine 71, 125–128, and 153–155; these read NKVD and SAK. The segment at 71 to 87 is switch-II; the sequence is GQEKFGGLRDGYYIHGQ. A compositionally biased stretch (low complexity) spans 199–208; sequence QHEAELAAAA. The interval 199–221 is disordered; sequence QHEAELAAAASQPLPDDDDETFD.

Belongs to the small GTPase superfamily. Ran family. In terms of assembly, found in a nuclear export complex with RanGTP, exportin and pre-miRNA.

It localises to the nucleus. Its function is as follows. GTP-binding protein involved in nucleocytoplasmic transport. Required for the import of protein into the nucleus and also for RNA export. Involved in chromatin condensation and control of cell cycle. The protein is GTP-binding nuclear protein Ran-A1 (RAN-A1) of Nicotiana tabacum (Common tobacco).